A 272-amino-acid chain; its full sequence is Proteasome subunit beta type-5 (272 aa).

A propeptide spans 1–62 (MINIDFDNIE…APKALEFAHG (62 aa)) (removed in mature form). Thr-63 functions as the Nucleophile in the catalytic mechanism.

This sequence belongs to the peptidase T1B family. In terms of assembly, the 26S proteasome consists of a 20S proteasome core and two 19S regulatory subunits. The 20S proteasome core is composed of 28 subunits that are arranged in four stacked rings, resulting in a barrel-shaped structure. The two end rings are each formed by seven alpha subunits, and the two central rings are each formed by seven beta subunits. The catalytic chamber with the active sites is on the inside of the barrel.

It is found in the cytoplasm. It localises to the nucleus. It catalyses the reaction Cleavage of peptide bonds with very broad specificity.. In terms of biological role, the proteasome is a multicatalytic proteinase complex which is characterized by its ability to cleave peptides with Arg, Phe, Tyr, Leu, and Glu adjacent to the leaving group at neutral or slightly basic pH. The proteasome has an ATP-dependent proteolytic activity. The sequence is that of Proteasome subunit beta type-5 (psmB5) from Dictyostelium discoideum (Social amoeba).